We begin with the raw amino-acid sequence, 218 residues long: Pyridoxine/pyridoxamine 5'-phosphate oxidase (218 aa).

Substrate-binding positions include R14–Y17 and K72. Residues R67–K72, Y82–T83, R88, K89, and Q111 each bind FMN. Residues Y129, R133, and S137 each coordinate substrate. Residues Q146–S147 and W191 each bind FMN. R197–H199 is a substrate binding site. FMN is bound at residue R201.

The protein belongs to the pyridoxamine 5'-phosphate oxidase family. As to quaternary structure, homodimer. The cofactor is FMN.

It catalyses the reaction pyridoxamine 5'-phosphate + O2 + H2O = pyridoxal 5'-phosphate + H2O2 + NH4(+). The catalysed reaction is pyridoxine 5'-phosphate + O2 = pyridoxal 5'-phosphate + H2O2. It participates in cofactor metabolism; pyridoxal 5'-phosphate salvage; pyridoxal 5'-phosphate from pyridoxamine 5'-phosphate: step 1/1. The protein operates within cofactor metabolism; pyridoxal 5'-phosphate salvage; pyridoxal 5'-phosphate from pyridoxine 5'-phosphate: step 1/1. Its function is as follows. Catalyzes the oxidation of either pyridoxine 5'-phosphate (PNP) or pyridoxamine 5'-phosphate (PMP) into pyridoxal 5'-phosphate (PLP). The polypeptide is Pyridoxine/pyridoxamine 5'-phosphate oxidase (Enterobacter sp. (strain 638)).